A 761-amino-acid chain; its full sequence is NADP-dependent malic enzyme (761 aa).

The tract at residues 1–437 (MPGIDKTDRA…QLSARRDPIA (437 aa)) is malic enzyme. The Proton donor role is filled by Tyr-49. Lys-104 acts as the Proton acceptor in catalysis. 3 residues coordinate a divalent metal cation: Glu-146, Asp-147, and Asp-172. Residues 205–208 (AGAA), Asn-297, and Asn-329 contribute to the NADP(+) site. The phosphate acetyltransferase stretch occupies residues 438-761 (STLQRIVERV…AAIAAYNAGT (324 aa)).

It in the N-terminal section; belongs to the malic enzymes family. This sequence in the C-terminal section; belongs to the phosphate acetyltransferase and butyryltransferase family. As to quaternary structure, homooctamer. The cofactor is Mg(2+). Mn(2+) serves as cofactor.

The catalysed reaction is (S)-malate + NADP(+) = pyruvate + CO2 + NADPH. It carries out the reaction oxaloacetate + H(+) = pyruvate + CO2. The protein is NADP-dependent malic enzyme (tme) of Rhizobium meliloti (strain 1021) (Ensifer meliloti).